A 139-amino-acid chain; its full sequence is MAVKIRLKRMGAKKRPFYRVVIADSRSPRDGRFIETVGTYNPISQPAEIKLDEEKILSWLGNGAQPSDTVRNLLSNAGILAKYNESKSGKKPAKKATTKEASAKKPTDKNTVAEIKAYLDAQGTAYTSSAKKADLLALV.

The disordered stretch occupies residues 85–108; that stretch reads ESKSGKKPAKKATTKEASAKKPTD. The span at 97-108 shows a compositional bias: basic and acidic residues; the sequence is TTKEASAKKPTD.

This sequence belongs to the bacterial ribosomal protein bS16 family.

This chain is Small ribosomal subunit protein bS16, found in Leuconostoc mesenteroides subsp. mesenteroides (strain ATCC 8293 / DSM 20343 / BCRC 11652 / CCM 1803 / JCM 6124 / NCDO 523 / NBRC 100496 / NCIMB 8023 / NCTC 12954 / NRRL B-1118 / 37Y).